Reading from the N-terminus, the 910-residue chain is Staphylococcal nuclease domain-containing protein 1 (910 aa).

An N-acetylalanine modification is found at alanine 2. 3 consecutive TNase-like domains span residues 18 to 166 (TVQR…MWSE), 193 to 328 (KPVN…IWRD), and 341 to 496 (KQFV…LHSK). Threonine 103 carries the phosphothreonine modification. Lysine 193 is modified (N6-acetyllysine). Threonine 240 is modified (phosphothreonine). 2 consecutive short sequence motifs (nuclear localization signal) follow at residues 321 to 325 (RRLRI) and 388 to 392 (KKLRP). At serine 426 the chain carries Phosphoserine. Residue lysine 513 forms a Glycyl lysine isopeptide (Lys-Gly) (interchain with G-Cter in SUMO2) linkage. Residues 525-660 (GRSEAVVEYV…KQKKEKVWAH (136 aa)) form the TNase-like 4 domain. Lysine 641 bears the N6-acetyllysine mark. Serine 645 carries the phosphoserine modification. Positions 729 to 787 (APRRGEFCIAKFVDGEWYRARVEKVESPAKVHVFYIDYGNREILPSTRLGTLPPAFSTR) constitute a Tudor domain. The residue at position 779 (threonine 779) is a Phosphothreonine. A phosphoserine mark is found at serine 785 and serine 909.

As to quaternary structure, forms a ternary complex with STAT6 and POLR2A. Associates with the RNA-induced silencing complex (RISC). Interacts with the RISC components AGO2, FMR1 and TNRC6A. Interacts with GTF2E1 and GTF2E2. Interacts with PIM1. Interacts with STAT5. Interacts with SYT11 (via C2 2 domain); the interaction with SYT11 is direct. In terms of processing, phosphorylated by PIM1 in vitro. In lactating cows highly expressed in mammary epithelial cells.

It is found in the cytoplasm. It localises to the nucleus. The protein resides in the melanosome. It carries out the reaction Endonucleolytic cleavage to nucleoside 3'-phosphates and 3'-phosphooligonucleotide end-products.. Endonuclease that mediates miRNA decay of both protein-free and AGO2-loaded miRNAs. As part of its function in miRNA decay, regulates mRNAs involved in G1-to-S phase transition. Functions as a bridging factor between STAT6 and the basal transcription factor. Plays a role in PIM1 regulation of MYB activity. Functions as a transcriptional coactivator for STAT5. The chain is Staphylococcal nuclease domain-containing protein 1 (SND1) from Bos taurus (Bovine).